The following is a 76-amino-acid chain: Large ribosomal subunit protein uL29 (76 aa).

The protein belongs to the universal ribosomal protein uL29 family.

The polypeptide is Large ribosomal subunit protein uL29 (Corynebacterium efficiens (strain DSM 44549 / YS-314 / AJ 12310 / JCM 11189 / NBRC 100395)).